We begin with the raw amino-acid sequence, 435 residues long: Serine--tRNA ligase (435 aa).

238–240 serves as a coordination point for L-serine; it reads TAE. 269–271 serves as a coordination point for ATP; it reads RAE. Glu292 contacts L-serine. Position 356 to 359 (356 to 359) interacts with ATP; sequence EISS. Ser392 is an L-serine binding site.

It belongs to the class-II aminoacyl-tRNA synthetase family. Type-1 seryl-tRNA synthetase subfamily. Homodimer. The tRNA molecule binds across the dimer.

The protein localises to the cytoplasm. It carries out the reaction tRNA(Ser) + L-serine + ATP = L-seryl-tRNA(Ser) + AMP + diphosphate + H(+). The catalysed reaction is tRNA(Sec) + L-serine + ATP = L-seryl-tRNA(Sec) + AMP + diphosphate + H(+). The protein operates within aminoacyl-tRNA biosynthesis; selenocysteinyl-tRNA(Sec) biosynthesis; L-seryl-tRNA(Sec) from L-serine and tRNA(Sec): step 1/1. In terms of biological role, catalyzes the attachment of serine to tRNA(Ser). Is also able to aminoacylate tRNA(Sec) with serine, to form the misacylated tRNA L-seryl-tRNA(Sec), which will be further converted into selenocysteinyl-tRNA(Sec). This is Serine--tRNA ligase from Methylobacterium sp. (strain 4-46).